A 233-amino-acid polypeptide reads, in one-letter code: Ubiquitin carboxyl-terminal hydrolase isozyme L4 (233 aa).

Residues 5–232 (RWLPLEANPE…LRFNAIALSA (228 aa)) form the UCH catalytic domain. An interaction with ubiquitin region spans residues 8 to 13 (PLEANP). Cys-95 functions as the Nucleophile in the catalytic mechanism. A Phosphoserine modification is found at Ser-133. His-172 acts as the Proton donor in catalysis. The tract at residues 222–227 (ELRFNA) is interaction with ubiquitin.

It belongs to the peptidase C12 family. Expressed in various tissues at low level.

Its subcellular location is the cytoplasm. It carries out the reaction Thiol-dependent hydrolysis of ester, thioester, amide, peptide and isopeptide bonds formed by the C-terminal Gly of ubiquitin (a 76-residue protein attached to proteins as an intracellular targeting signal).. Functionally, ubiquitin-protein hydrolase is involved both in the processing of ubiquitin precursors and of ubiquitinated proteins. This enzyme is a thiol protease that recognizes and hydrolyzes a peptide bond at the C-terminal glycine of ubiquitin. This chain is Ubiquitin carboxyl-terminal hydrolase isozyme L4 (Uchl4), found in Mus musculus (Mouse).